The sequence spans 389 residues: S-adenosylmethionine synthase 3 (389 aa).

Glu-9 serves as a coordination point for Mg(2+). ATP is bound at residue His-15. Position 43 (Glu-43) interacts with K(+). 2 residues coordinate L-methionine: Glu-56 and Gln-99. Residues 167 to 169 (DGK), 235 to 238 (SGRF), Asp-246, 252 to 253 (RK), Ala-269, Lys-273, and Lys-277 each bind ATP. Asp-246 is an L-methionine binding site. Residue Lys-277 coordinates L-methionine.

It belongs to the AdoMet synthase family. As to quaternary structure, homotetramer. It depends on Mn(2+) as a cofactor. Requires Mg(2+) as cofactor. Co(2+) is required as a cofactor. The cofactor is K(+).

The protein resides in the cytoplasm. It catalyses the reaction L-methionine + ATP + H2O = S-adenosyl-L-methionine + phosphate + diphosphate. The protein operates within amino-acid biosynthesis; S-adenosyl-L-methionine biosynthesis; S-adenosyl-L-methionine from L-methionine: step 1/1. In terms of biological role, catalyzes the formation of S-adenosylmethionine from methionine and ATP. The reaction comprises two steps that are both catalyzed by the same enzyme: formation of S-adenosylmethionine (AdoMet) and triphosphate, and subsequent hydrolysis of the triphosphate. This is S-adenosylmethionine synthase 3 (METK3) from Vitis vinifera (Grape).